The sequence spans 521 residues: MKVSSLLSVALPGAALAATDSFQSRCNEFQNKIDIANVTVRSVAYVAAGQNISQAEVASVCKASVQASVDLCRVTMNISTSDRSHLWAEAWLPRNYTGRFVSTGNGGLAGCVQETDLNFAANFGFATVGTNGGHDGDTAKYFLNNSEVLADFAYRSVHEGTVVGKQLTQLFYDEGYNYSYYLGCSTGGRQGYQQVQRFPDDYDGVIAGSAAMNFINLISWGAFLWKATGLADDPDFISADLWSVIHQEIVRQCDLVDGALDGIIEDPDFCAPVIERLICDGTTNGTSCITGAQAAKVNRALSDFYGPDGTVYYPRLNYGGEADSAYLYFTGSMYSRTEEWYKYVVYNDTNWNSSQWTLESAKLALEQNPFNIQAFDPNITAFRDRGGKLLSYHGTQDPIISSTDSKLYYRRVANALNAAPSELDEFYRFFQISGMGHCGDGTGASYIGQGYGTYTSKAPQVNLLRTMVDWVENGKAPEYMPGNKLNANGSIEYMRKHCRYPKHNVHTGPGNYTDPNSWTCV.

A signal peptide spans 1–17; it reads MKVSSLLSVALPGAALA. Disulfide bonds link cysteine 26-cysteine 72 and cysteine 61-cysteine 111. Residues asparagine 37, asparagine 51, asparagine 77, asparagine 95, asparagine 144, and asparagine 177 are each glycosylated (N-linked (GlcNAc...) asparagine). Intrachain disulfides connect cysteine 184-cysteine 438, cysteine 253-cysteine 270, and cysteine 279-cysteine 288. Catalysis depends on serine 185, which acts as the Acyl-ester intermediate. 5 residues coordinate Ca(2+): aspartate 254, aspartate 257, alanine 259, aspartate 261, and isoleucine 263. 4 N-linked (GlcNAc...) asparagine glycosylation sites follow: asparagine 284, asparagine 347, asparagine 352, and asparagine 378. Active-site charge relay system residues include aspartate 397 and histidine 437. 2 N-linked (GlcNAc...) asparagine glycosylation sites follow: asparagine 488 and asparagine 511. The cysteines at positions 498 and 520 are disulfide-linked.

The protein belongs to the tannase family.

The protein resides in the secreted. It carries out the reaction feruloyl-polysaccharide + H2O = ferulate + polysaccharide.. Functionally, involved in degradation of plant cell walls. Hydrolyzes the feruloyl-arabinose ester bond in arabinoxylans as well as the feruloyl-galactose and feruloyl-arabinose ester bonds in pectin. The polypeptide is Probable feruloyl esterase B (faeB) (Aspergillus niger (strain ATCC MYA-4892 / CBS 513.88 / FGSC A1513)).